The primary structure comprises 351 residues: Very-long-chain 3-oxoacyl-CoA reductase (351 aa).

The chain crosses the membrane as a helical span at residues 26-46; the sequence is LLWCAFTVGAVKLTTFMLSLI. Leu72, Asp126, Asn153, Tyr225, Lys229, Val258, and Ser260 together coordinate NADP(+). Tyr225 acts as the Proton donor in catalysis. Lys229 serves as the catalytic Lowers pKa of active site Tyr.

Belongs to the short-chain dehydrogenases/reductases (SDR) family.

Its subcellular location is the endoplasmic reticulum membrane. It carries out the reaction a very-long-chain (3R)-3-hydroxyacyl-CoA + NADP(+) = a very-long-chain 3-oxoacyl-CoA + NADPH + H(+). The protein operates within lipid metabolism; fatty acid biosynthesis. Its function is as follows. Component of the microsomal membrane bound fatty acid elongation system, which produces the 26-carbon very long-chain fatty acids (VLCFA) from palmitate. Catalyzes the reduction of the 3-ketoacyl-CoA intermediate that is formed in each cycle of fatty acid elongation. VLCFAs serve as precursors for ceramide and sphingolipids. The protein is Very-long-chain 3-oxoacyl-CoA reductase of Eremothecium gossypii (strain ATCC 10895 / CBS 109.51 / FGSC 9923 / NRRL Y-1056) (Yeast).